The primary structure comprises 590 residues: O-fucosyltransferase 2 (590 aa).

Residues Met-1–Asp-16 are compositionally biased toward basic and acidic residues. A disordered region spans residues Met-1–His-26. Residues Thr-67–Ser-87 form a helical; Signal-anchor for type II membrane protein membrane-spanning segment. A glycan (N-linked (GlcNAc...) asparagine) is linked at Asn-125. His-365 to Arg-367 provides a ligand contact to substrate. N-linked (GlcNAc...) asparagine glycans are attached at residues Asn-485 and Asn-546.

This sequence belongs to the glycosyltransferase GT106 family.

The protein resides in the membrane. It functions in the pathway glycan metabolism. The protein is O-fucosyltransferase 2 of Arabidopsis thaliana (Mouse-ear cress).